The primary structure comprises 541 residues: Metal transporter Nramp6 (541 aa).

A compositionally biased stretch (low complexity) spans 1-18 (MAPLPAAATATASSAATP). The segment at 1 to 44 (MAPLPAAATATASSAATPADDEAHSLLPSTPSNEEDDDDLEERA) is disordered. Helical transmembrane passes span 87 to 107 (LWLF…PGNL), 120 to 140 (TLLW…LLAA), 172 to 192 (VAMV…IKIL), 196 to 216 (FLPL…FLSL), 224 to 244 (LEAV…WMFT), 270 to 290 (AVGV…SALV), 316 to 336 (IALA…AKGF), 358 to 378 (FGGG…AAGQ), 404 to 424 (IRSL…ALFF), 436 to 456 (WLNV…ITLV), 474 to 494 (VTWT…LDFF), and 502 to 522 (LSGS…LYLI).

The protein belongs to the NRAMP (TC 2.A.55) family.

Its subcellular location is the membrane. Probable metal transporter. The polypeptide is Metal transporter Nramp6 (NRAMP6) (Oryza sativa subsp. japonica (Rice)).